Consider the following 376-residue polypeptide: Chaperone protein DnaJ (376 aa).

One can recognise a J domain in the interval 5–70 (DYYEILGVSK…QKRAAYDQYG (66 aa)). A CR-type zinc finger spans residues 131-209 (GVTKEIRIPT…CHGHGRVERS (79 aa)). Zn(2+) is bound by residues Cys144, Cys147, Cys161, Cys164, Cys183, Cys186, Cys197, and Cys200. CXXCXGXG motif repeat units lie at residues 144 to 151 (CDVCHGSG), 161 to 168 (CPTCHGSG), 183 to 190 (CPHCQGRG), and 197 to 204 (CNKCHGHG).

It belongs to the DnaJ family. Homodimer. Zn(2+) serves as cofactor.

It localises to the cytoplasm. Participates actively in the response to hyperosmotic and heat shock by preventing the aggregation of stress-denatured proteins and by disaggregating proteins, also in an autonomous, DnaK-independent fashion. Unfolded proteins bind initially to DnaJ; upon interaction with the DnaJ-bound protein, DnaK hydrolyzes its bound ATP, resulting in the formation of a stable complex. GrpE releases ADP from DnaK; ATP binding to DnaK triggers the release of the substrate protein, thus completing the reaction cycle. Several rounds of ATP-dependent interactions between DnaJ, DnaK and GrpE are required for fully efficient folding. Also involved, together with DnaK and GrpE, in the DNA replication of plasmids through activation of initiation proteins. This chain is Chaperone protein DnaJ, found in Shigella boydii serotype 18 (strain CDC 3083-94 / BS512).